The primary structure comprises 182 residues: Caltractin ICL1b (182 aa).

Positions 1 to 31 (MSRRGQQPPPQQQQAPPQKNQAGKFNPAEFV) are disordered. EF-hand domains lie at 38-73 (EEVLEIKEAFDLFDTDGTQSIDPKELKAAMTSLGFE), 74-109 (AKNQTIYQMISDLDTDGSGQIDFAEFLKLMTARISE), 111-146 (DSKADIQKVFNLFDSERAGVITLKDLRKVAKELGET), and 147-182 (MDDSELQEMIDRADSDGDAQVTFEDFYNIMTKKTFA). Ca(2+)-binding residues include aspartate 51, aspartate 53, threonine 55, serine 57, glutamate 62, aspartate 87, aspartate 89, serine 91, glutamine 93, and glutamate 98.

Belongs to the centrin family.

Its subcellular location is the cytoplasm. It is found in the cytoskeleton. In terms of biological role, plays a fundamental role in microtubule organizing center structure and function. Component of the infraciliary lattice (ICL) and the ciliary basal bodies. The sequence is that of Caltractin ICL1b (Icl1b) from Paramecium tetraurelia.